The chain runs to 217 residues: Trimethylamine corrinoid protein (217 aa).

The B12-binding N-terminal domain maps to 1-92 (MANKEEIIAK…EMEKRKSQTK (92 aa)). The region spanning 94 to 217 (LGTVAIGTIE…VAKVKAALNV (124 aa)) is the B12-binding domain. Position 107 (H107) interacts with methylcob(III)alamin.

Belongs to the methylamine corrinoid protein family. As to quaternary structure, can form a complex with MttB.

It functions in the pathway one-carbon metabolism; methanogenesis from trimethylamine. Functionally, acts probably as a methyl group carrier between MttB and either MtbA or MtaA. In Methanosarcina barkeri, this protein is Trimethylamine corrinoid protein.